The sequence spans 215 residues: Large ribosomal subunit protein uL1 (215 aa).

This sequence belongs to the universal ribosomal protein uL1 family. Part of the 50S ribosomal subunit.

Binds directly to 23S rRNA. Probably involved in E site tRNA release. In terms of biological role, protein L1 is also a translational repressor protein, it controls the translation of its operon by binding to its mRNA. This is Large ribosomal subunit protein uL1 from Archaeoglobus fulgidus (strain ATCC 49558 / DSM 4304 / JCM 9628 / NBRC 100126 / VC-16).